The primary structure comprises 48 residues: Sperm protamine P1 (48 aa).

The protein belongs to the protamine P1 family. Testis.

It is found in the nucleus. It localises to the chromosome. In terms of biological role, protamines substitute for histones in the chromatin of sperm during the haploid phase of spermatogenesis. They compact sperm DNA into a highly condensed, stable and inactive complex. In Monophyllus redmani (Greater Antillean long-tongued bat), this protein is Sperm protamine P1 (PRM1).